The following is a 199-amino-acid chain: Probable molybdenum cofactor guanylyltransferase (199 aa).

Residues 6-8 (LAG), Lys18, Asp65, and Asp97 contribute to the GTP site. Asp97 provides a ligand contact to Mg(2+).

It belongs to the MobA family. The cofactor is Mg(2+).

The protein localises to the cytoplasm. The enzyme catalyses Mo-molybdopterin + GTP + H(+) = Mo-molybdopterin guanine dinucleotide + diphosphate. Transfers a GMP moiety from GTP to Mo-molybdopterin (Mo-MPT) cofactor (Moco or molybdenum cofactor) to form Mo-molybdopterin guanine dinucleotide (Mo-MGD) cofactor. The sequence is that of Probable molybdenum cofactor guanylyltransferase from Staphylococcus aureus (strain Mu50 / ATCC 700699).